The following is a 270-amino-acid chain: Eukaryotic translation initiation factor 3 subunit G-1 (270 aa).

An RRM domain is found at 189-267; it reads AAIRISNLSE…LILSVEWSKP (79 aa).

The protein belongs to the eIF-3 subunit G family. Component of the eukaryotic translation initiation factor 3 (eIF-3) complex. The eIF-3 complex interacts with pix.

It is found in the cytoplasm. Its function is as follows. RNA-binding component of the eukaryotic translation initiation factor 3 (eIF-3) complex, which is involved in protein synthesis of a specialized repertoire of mRNAs and, together with other initiation factors, stimulates binding of mRNA and methionyl-tRNAi to the 40S ribosome. The eIF-3 complex specifically targets and initiates translation of a subset of mRNAs involved in cell proliferation. This subunit can bind 18S rRNA. The protein is Eukaryotic translation initiation factor 3 subunit G-1 of Drosophila ananassae (Fruit fly).